The sequence spans 207 residues: Cytochrome bo(3) ubiquinol oxidase subunit 3 (207 aa).

The Cytoplasmic segment spans residues 1 to 26 (MSSQVMHGAAHGHDHGHDDHHHDSGQ). A helical membrane pass occupies residues 27 to 47 (MTVLGFWLYLMTDCILFASLF). At 48-70 (ATYAVLSGSFAGGPSGHDIFQLD) the chain is on the periplasmic side. The chain crosses the membrane as a helical span at residues 71 to 91 (FVAVETLFLLLSSITFGFAML). Topologically, residues 92-99 (KMFDGKKA) are cytoplasmic. Residues 100–120 (GVLGWLAVTFLFGAGFIAMEI) form a helical membrane-spanning segment. At 121–141 (YEFHHLIAEGFGPQRSGFLSG) the chain is on the periplasmic side. Residues 142-162 (FFALVGTHGLHVTAGLIWMAI) form a helical membrane-spanning segment. At 163–185 (MMYQINKHGITPTAKTRMSCLSL) the chain is on the cytoplasmic side. A helical membrane pass occupies residues 186–206 (FWHFLDVVWICVFTVVYLLGV). Position 207 (L207) is a topological domain, periplasmic.

Belongs to the cytochrome c oxidase subunit 3 family. Heterooctamer of two A chains, two B chains, two C chains and two D chains.

Its subcellular location is the cell inner membrane. Its function is as follows. Cytochrome bo(3) ubiquinol terminal oxidase is the component of the aerobic respiratory chain of E.coli that predominates when cells are grown at high aeration. Has proton pump activity across the membrane in addition to electron transfer, pumping 2 protons/electron. In Pseudomonas putida (Arthrobacter siderocapsulatus), this protein is Cytochrome bo(3) ubiquinol oxidase subunit 3 (cyoC).